The primary structure comprises 786 residues: Exo-beta-D-glucosaminidase (786 aa).

Residues Tyr53, 102–103 (GE), 178–179 (DE), Glu306, Glu347, and Tyr379 each bind substrate. Glu179 serves as the catalytic Proton donor. Glu347 serves as the catalytic Nucleophile.

This sequence belongs to the glycosyl hydrolase 35 family. Homodimer.

The protein localises to the cytoplasm. The catalysed reaction is beta-D-glucosaminyl-(1-&gt;4)-N-acetyl-D-glucosamine + H2O = D-glucosamine + N-acetyl-D-glucosamine. Its pathway is glycan degradation; chitin degradation. In terms of biological role, exo-type enzyme that specifically cleaves the non-reducing terminal glycosidic bond of chitooligosaccharides. Catalyzes the hydrolysis of GlcN-GlcNAc to glucosamine (GlcN) and N-acetylglucosamine (GlcNAc). Involved in chitin degradation. Can also hydrolyze reduced chitobiose (GlcN2OH) and chitooligosaccharides of various chain lengths. In Thermococcus kodakarensis (strain ATCC BAA-918 / JCM 12380 / KOD1) (Pyrococcus kodakaraensis (strain KOD1)), this protein is Exo-beta-D-glucosaminidase.